A 180-amino-acid polypeptide reads, in one-letter code: NADH-quinone oxidoreductase subunit B (180 aa).

Residues cysteine 59, cysteine 60, cysteine 124, and cysteine 154 each contribute to the [4Fe-4S] cluster site.

Belongs to the complex I 20 kDa subunit family. As to quaternary structure, NDH-1 is composed of 14 different subunits. Subunits NuoB, C, D, E, F, and G constitute the peripheral sector of the complex. The cofactor is [4Fe-4S] cluster.

The protein localises to the cell inner membrane. It catalyses the reaction a quinone + NADH + 5 H(+)(in) = a quinol + NAD(+) + 4 H(+)(out). Functionally, NDH-1 shuttles electrons from NADH, via FMN and iron-sulfur (Fe-S) centers, to quinones in the respiratory chain. The immediate electron acceptor for the enzyme in this species is believed to be ubiquinone. Couples the redox reaction to proton translocation (for every two electrons transferred, four hydrogen ions are translocated across the cytoplasmic membrane), and thus conserves the redox energy in a proton gradient. The polypeptide is NADH-quinone oxidoreductase subunit B (Beijerinckia indica subsp. indica (strain ATCC 9039 / DSM 1715 / NCIMB 8712)).